The following is a 424-amino-acid chain: Enolase (424 aa).

Gln-165 provides a ligand contact to (2R)-2-phosphoglycerate. Residue Glu-207 is the Proton donor of the active site. Mg(2+)-binding residues include Asp-244, Glu-283, and Asp-310. Residues Lys-335, Arg-364, Ser-365, and Lys-386 each coordinate (2R)-2-phosphoglycerate. Lys-335 serves as the catalytic Proton acceptor.

It belongs to the enolase family. It depends on Mg(2+) as a cofactor.

The protein resides in the cytoplasm. The protein localises to the secreted. It is found in the cell surface. It catalyses the reaction (2R)-2-phosphoglycerate = phosphoenolpyruvate + H2O. Its pathway is carbohydrate degradation; glycolysis; pyruvate from D-glyceraldehyde 3-phosphate: step 4/5. Catalyzes the reversible conversion of 2-phosphoglycerate (2-PG) into phosphoenolpyruvate (PEP). It is essential for the degradation of carbohydrates via glycolysis. The polypeptide is Enolase (Chlamydia trachomatis serovar D (strain ATCC VR-885 / DSM 19411 / UW-3/Cx)).